We begin with the raw amino-acid sequence, 536 residues long: Probable tyrosyl-DNA phosphodiesterase (536 aa).

H122 serves as the catalytic Nucleophile. Substrate is bound at residue K124. The interaction with DNA stretch occupies residues 315 to 318 (SMGS). Catalysis depends on H401, which acts as the Proton donor/acceptor. K403 provides a ligand contact to substrate.

The protein belongs to the tyrosyl-DNA phosphodiesterase family.

The protein resides in the nucleus. In terms of biological role, DNA repair enzyme that can remove a variety of covalent adducts from DNA through hydrolysis of a 3'-phosphodiester bond, giving rise to DNA with a free 3' phosphate. Catalyzes the hydrolysis of dead-end complexes between DNA and the topoisomerase I active site tyrosine residue. Hydrolyzes 3'-phosphoglycolates on protruding 3' ends on DNA double-strand breaks due to DNA damage by radiation and free radicals. Acts on blunt-ended double-strand DNA breaks and on single-stranded DNA. May have low 3'exonuclease activity and may be able to remove a single nucleoside from the 3'end of DNA and RNA molecules with 3'hydroxyl groups. Has no exonuclease activity towards DNA or RNA with a 3'phosphate. In Schizosaccharomyces pombe (strain 972 / ATCC 24843) (Fission yeast), this protein is Probable tyrosyl-DNA phosphodiesterase.